We begin with the raw amino-acid sequence, 151 residues long: Ribosome maturation factor RimP (151 aa).

The protein belongs to the RimP family.

It is found in the cytoplasm. Functionally, required for maturation of 30S ribosomal subunits. In Hydrogenovibrio crunogenus (strain DSM 25203 / XCL-2) (Thiomicrospira crunogena), this protein is Ribosome maturation factor RimP.